The primary structure comprises 317 residues: Lipase 1 (317 aa).

The signal sequence occupies residues 1-18 (MLLKRLCFAALFSLSMVG). C19 carries N-palmitoyl cysteine lipidation. C19 carries the S-diacylglycerol cysteine lipid modification. One can recognise an AB hydrolase-1 domain in the interval 69 to 296 (PLLLIHGFGG…MEDVGHVPMV (228 aa)). Residue H74 is part of the active site. S142 acts as the Nucleophile in catalysis. Catalysis depends on charge relay system residues E270 and H292.

The protein localises to the cell outer membrane. The enzyme catalyses a triacylglycerol + H2O = a diacylglycerol + a fatty acid + H(+). The polypeptide is Lipase 1 (lip1) (Psychrobacter immobilis).